A 426-amino-acid polypeptide reads, in one-letter code: Enolase (426 aa).

Gln-163 lines the (2R)-2-phosphoglycerate pocket. Catalysis depends on Glu-205, which acts as the Proton donor. The Mg(2+) site is built by Asp-242, Glu-285, and Asp-312. (2R)-2-phosphoglycerate contacts are provided by Lys-337, Arg-366, Ser-367, and Lys-388. Residue Lys-337 is the Proton acceptor of the active site.

The protein belongs to the enolase family. It depends on Mg(2+) as a cofactor.

Its subcellular location is the cytoplasm. It localises to the secreted. It is found in the cell surface. It carries out the reaction (2R)-2-phosphoglycerate = phosphoenolpyruvate + H2O. The protein operates within carbohydrate degradation; glycolysis; pyruvate from D-glyceraldehyde 3-phosphate: step 4/5. Catalyzes the reversible conversion of 2-phosphoglycerate (2-PG) into phosphoenolpyruvate (PEP). It is essential for the degradation of carbohydrates via glycolysis. The sequence is that of Enolase from Nitrobacter winogradskyi (strain ATCC 25391 / DSM 10237 / CIP 104748 / NCIMB 11846 / Nb-255).